Consider the following 306-residue polypeptide: Pantothenate kinase (306 aa).

An ATP-binding site is contributed by 91–98; it reads GSVAVGKS.

The protein belongs to the prokaryotic pantothenate kinase family.

Its subcellular location is the cytoplasm. The enzyme catalyses (R)-pantothenate + ATP = (R)-4'-phosphopantothenate + ADP + H(+). It participates in cofactor biosynthesis; coenzyme A biosynthesis; CoA from (R)-pantothenate: step 1/5. This chain is Pantothenate kinase, found in Streptococcus pneumoniae serotype 2 (strain D39 / NCTC 7466).